Here is a 20-residue protein sequence, read N- to C-terminus: Ribosome-inactivating protein (20 aa).

Residues Asn-1–Asn-20 are disordered. Over residues Gly-8 to Asn-20 the composition is skewed to polar residues.

The protein belongs to the ribosome-inactivating protein family. Type 1 RIP subfamily.

The catalysed reaction is Endohydrolysis of the N-glycosidic bond at one specific adenosine on the 28S rRNA.. This is Ribosome-inactivating protein from Cucurbita pepo (Vegetable marrow).